The chain runs to 166 residues: NADH-quinone oxidoreductase subunit I (166 aa).

2 4Fe-4S ferredoxin-type domains span residues 57–87 (LRRYPNGEERCIACKLCEAVCPALAITIESE) and 97–126 (TRYDIDMFKCINCGLCEESCPVDSIVVTPI). The [4Fe-4S] cluster site is built by Cys67, Cys70, Cys73, Cys77, Cys106, Cys109, Cys112, and Cys116.

This sequence belongs to the complex I 23 kDa subunit family. NDH-1 is composed of 14 different subunits. Subunits NuoA, H, J, K, L, M, N constitute the membrane sector of the complex. It depends on [4Fe-4S] cluster as a cofactor.

Its subcellular location is the cell inner membrane. It catalyses the reaction a quinone + NADH + 5 H(+)(in) = a quinol + NAD(+) + 4 H(+)(out). Functionally, NDH-1 shuttles electrons from NADH, via FMN and iron-sulfur (Fe-S) centers, to quinones in the respiratory chain. The immediate electron acceptor for the enzyme in this species is believed to be ubiquinone. Couples the redox reaction to proton translocation (for every two electrons transferred, four hydrogen ions are translocated across the cytoplasmic membrane), and thus conserves the redox energy in a proton gradient. This chain is NADH-quinone oxidoreductase subunit I, found in Legionella pneumophila (strain Lens).